Reading from the N-terminus, the 397-residue chain is MSESVHTNTSLWSKGMKAVIVAQFLSAFGDNALLFATLALLKAQFYPEWSQPILQMVFVGAYILFAPFVGQVADSFAKGRVMMFANGLKLLGAASICFGINPFLGYTLVGVGAAAYSPAKYGILGELTTGSKLVKANGLMEASTIAAILLGSVAGGVLADWHVLVALAACALAYGGAVVANIYIPKLAAARPGQSWNLINMTRSFLNACTSLWRNGETRFSLVGTSLFWGAGVTLRFLLVLWVPVALGITDNATPTYLNAMVAIGIVVGAGAAAKLVTLETVSRCMPAGILIGVVVLIFSLQHEQLPAYALLMLIGVLGGFFVVPLNALLQERGKKSVGAGNAIAVQNLGENSAMLLMLGIYSLAVMVGIPVVPIGIGFGALFALAITALWIWQRRH.

Residues 1 to 17 (MSESVHTNTSLWSKGMK) are Periplasmic-facing. A helical membrane pass occupies residues 18-38 (AVIVAQFLSAFGDNALLFATL). At 39 to 52 (ALLKAQFYPEWSQP) the chain is on the cytoplasmic side. A helical membrane pass occupies residues 53-73 (ILQMVFVGAYILFAPFVGQVA). At 74–90 (DSFAKGRVMMFANGLKL) the chain is on the periplasmic side. A helical transmembrane segment spans residues 91–111 (LGAASICFGINPFLGYTLVGV). Topologically, residues 112-144 (GAAAYSPAKYGILGELTTGSKLVKANGLMEAST) are cytoplasmic. The chain crosses the membrane as a helical span at residues 145–165 (IAAILLGSVAGGVLADWHVLV). Ala166 is a topological domain (periplasmic). The helical transmembrane segment at 167–187 (LAACALAYGGAVVANIYIPKL) threads the bilayer. Topologically, residues 188-226 (AAARPGQSWNLINMTRSFLNACTSLWRNGETRFSLVGTS) are cytoplasmic. Residues 227 to 247 (LFWGAGVTLRFLLVLWVPVAL) form a helical membrane-spanning segment. The Periplasmic segment spans residues 248–256 (GITDNATPT). A helical transmembrane segment spans residues 257-277 (YLNAMVAIGIVVGAGAAAKLV). At 278-280 (TLE) the chain is on the cytoplasmic side. Residues 281–301 (TVSRCMPAGILIGVVVLIFSL) form a helical membrane-spanning segment. The Periplasmic portion of the chain corresponds to 302–304 (QHE). A helical membrane pass occupies residues 305-325 (QLPAYALLMLIGVLGGFFVVP). Over 326-343 (LNALLQERGKKSVGAGNA) the chain is Cytoplasmic. A helical membrane pass occupies residues 344 to 364 (IAVQNLGENSAMLLMLGIYSL). Residues 365–366 (AV) lie on the Periplasmic side of the membrane. The chain crosses the membrane as a helical span at residues 367–387 (MVGIPVVPIGIGFGALFALAI). Topologically, residues 388 to 397 (TALWIWQRRH) are cytoplasmic.

The protein belongs to the major facilitator superfamily. LplT (TC 2.A.1.42) family.

The protein localises to the cell inner membrane. Functionally, catalyzes the facilitated diffusion of 2-acyl-glycero-3-phosphoethanolamine (2-acyl-GPE) into the cell. The chain is Lysophospholipid transporter LplT from Escherichia coli O157:H7 (strain EC4115 / EHEC).